Reading from the N-terminus, the 183-residue chain is Ribulose bisphosphate carboxylase small subunit, chloroplastic (183 aa).

The transit peptide at Met-1–Gln-59 directs the protein to the chloroplast.

The protein belongs to the RuBisCO small chain family. As to quaternary structure, heterohexadecamer of 8 large and 8 small subunits.

It localises to the plastid. The protein localises to the chloroplast. RuBisCO catalyzes two reactions: the carboxylation of D-ribulose 1,5-bisphosphate, the primary event in carbon dioxide fixation, as well as the oxidative fragmentation of the pentose substrate. Both reactions occur simultaneously and in competition at the same active site. Although the small subunit is not catalytic it is essential for maximal activity. The chain is Ribulose bisphosphate carboxylase small subunit, chloroplastic from Malus sp. (Crab apple).